The chain runs to 279 residues: Energy-coupling factor transporter ATP-binding protein EcfA1 (279 aa).

The region spanning 6 to 240 is the ABC transporter domain; sequence VRLEHVFYKY…ADAMREIGLG (235 aa). An ATP-binding site is contributed by 40 to 47; the sequence is GHNGSGKS.

It belongs to the ABC transporter superfamily. Energy-coupling factor EcfA family. Forms a stable energy-coupling factor (ECF) transporter complex composed of 2 membrane-embedded substrate-binding proteins (S component), 2 ATP-binding proteins (A component) and 2 transmembrane proteins (T component).

Its subcellular location is the cell membrane. In terms of biological role, ATP-binding (A) component of a common energy-coupling factor (ECF) ABC-transporter complex. Unlike classic ABC transporters this ECF transporter provides the energy necessary to transport a number of different substrates. In Listeria monocytogenes serovar 1/2a (strain ATCC BAA-679 / EGD-e), this protein is Energy-coupling factor transporter ATP-binding protein EcfA1.